Reading from the N-terminus, the 500-residue chain is Cytosol aminopeptidase (500 aa).

2 residues coordinate Mn(2+): lysine 265 and aspartate 270. Lysine 277 is an active-site residue. Residues aspartate 288, aspartate 347, and glutamate 349 each contribute to the Mn(2+) site. Arginine 351 is an active-site residue.

It belongs to the peptidase M17 family. The cofactor is Mn(2+).

The protein resides in the cytoplasm. The enzyme catalyses Release of an N-terminal amino acid, Xaa-|-Yaa-, in which Xaa is preferably Leu, but may be other amino acids including Pro although not Arg or Lys, and Yaa may be Pro. Amino acid amides and methyl esters are also readily hydrolyzed, but rates on arylamides are exceedingly low.. The catalysed reaction is Release of an N-terminal amino acid, preferentially leucine, but not glutamic or aspartic acids.. Presumably involved in the processing and regular turnover of intracellular proteins. Catalyzes the removal of unsubstituted N-terminal amino acids from various peptides. In Rickettsia prowazekii (strain Madrid E), this protein is Cytosol aminopeptidase (pepA).